We begin with the raw amino-acid sequence, 1663 residues long: Complement C3 (1663 aa).

The first 24 residues, M1–G24, serve as a signal peptide directing secretion. At S40 the chain carries Phosphoserine. 13 cysteine pairs are disulfide-bonded: C559–C816, C626–C661, C693–C720, C694–C727, C707–C728, C873–C1513, C1101–C1158, C1358–C1489, C1389–C1458, C1506–C1511, C1518–C1590, C1537–C1661, and C1637–C1646. S671 is modified (phosphoserine). In terms of domain architecture, Anaphylatoxin-like spans C693–C728. An N-linked (GlcNAc...) asparagine glycan is attached at N939. S968 is modified (phosphoserine). The isoglutamyl cysteine thioester (Cys-Gln) cross-link spans C1010–Q1013. The residue at position 1321 (S1321) is a Phosphoserine. The NTR domain occupies C1518–C1661. A Phosphoserine modification is found at S1573. An N-linked (GlcNAc...) asparagine glycan is attached at N1617. The tract at residues A1634–Y1659 is interaction with CFP/properdin.

As to quaternary structure, in absence of complement activation, the C3 precursor is first processed by the removal of 4 Arg residues, forming two chains, beta and alpha, linked by a disulfide bond. Complement C3b is composed of complement C3b and complement C3 beta chains that are associated via disulfide bonds. Non-enzymatic component of the C5 convertase, also named C4bC2bC3b, composed of the serine protease complement C2b (C2), complement C3b, as well as complement C4b (C4). Non-enzymatic component of the C5 convertase of the alternative complement pathways composed of the serine protease complement CFB and complement C3b. Interacts with CFP; interaction takes place together with CFB in the alternative complement system and allows the complex to become active. Interacts with CR1 (via Sushi 8 and Sushi 9 domains). Interacts with CFH. In terms of assembly, interacts with CFH. Interacts with CR2. As to quaternary structure, during pregnancy, C3dg exists as a complex (probably a 2:2:2 heterohexamer) with AGT and the proform of PRG2. Interacts with CR2 (via the N-terminal Sushi domains 1 and 2). Post-translationally, C3 precursor is first processed by the removal of 4 Arg residues, forming two chains, beta and alpha, linked by a disulfide bond. During activation of the complement systems, the alpha chain is cleaved into C3a and C3b by the C3 convertase: C3b stays linked to the beta chain, while C3a is released in the plasma. The alpha chain is cleaved by the serine protease complement C2b component of the C3 convertase to generate C3a and C3b following activation by the classical, lectin and GZMK complement systems. The alpha chain is cleaved by CFB component of the C3 convertase to generate C3a and C3b following activation by the alternative complement system. C3a is further processed by carboxypeptidases to release the C-terminal arginine residue generating the acylation stimulating protein (ASP). Levels of ASP are increased in adipocytes in the postprandial period and by insulin and dietary chylomicrons. In terms of processing, complement C3b is rapidly split in two positions by factor I (CFI) and a cofactor (CFH) to form iC3b (inactivated C3b) and C3f which is released. CFI and CFH catalyze proteolytic degradation of already-deposited complement C3b. Then iC3b is slowly cleaved (possibly by CFI) to form C3c (beta chain + alpha' chain fragment 1 + alpha' chain fragment 2), C3dg and C3f. Other proteases produce other fragments such as C3d or C3g. Post-translationally, upon activation, the internal thioester bond reacts with carbohydrate antigens on the target surface to form amide or ester bonds, leading to covalent association with the surface of pathogens. Complement C3b interacts with complement C4b via a thioester linkage. In terms of processing, phosphorylated by FAM20C in the extracellular medium.

The protein localises to the secreted. It is found in the cell surface. With respect to regulation, complement activation is inhibited by VSIG4. Its function is as follows. Precursor of non-enzymatic components of the classical, alternative, lectin and GZMK complement pathways, which consist in a cascade of proteins that leads to phagocytosis and breakdown of pathogens and signaling that strengthens the adaptive immune system. Functionally, non-enzymatic component of C5 convertase. Generated following cleavage by C3 convertase, it covalently attaches to the surface of pathogens, where it acts as an opsonin that marks the surface of antigens for removal. Complement C3b binds covalently via its reactive thioester, to cell surface carbohydrates or immune aggregates. Together with complement C4b, it then recruits the serine protease complement C2b to form the C5 convertase, which cleaves and activate C5, the next component of the complement pathways. In the alternative complement pathway, recruits the serine protease CFB to form the C5 convertase that cleaves and activates C5. In terms of biological role, mediator of local inflammatory process released following cleavage by C3 convertase. Acts by binding to its receptor, C3AR1, activating G protein-coupled receptor signaling, promoting the phosphorylation, ARRB2-mediated internalization and endocytosis of C3AR1. C3a anaphylatoxin stimulates the activation of immune cells such as mast cells and basophilic leukocytes to release inflammation agents, such as cytokines, chemokines and histamine, which promote inflammation development. Also acts as potent chemoattractant for the migration of macrophages and neutrophils to the inflamed tissues, resulting in neutralization of the inflammatory triggers by multiple ways, such as phagocytosis and generation of reactive oxidants. Adipogenic hormone that stimulates triglyceride synthesis and glucose transport in adipocytes, regulating fat storage and playing a role in postprandial triglyceride clearance. Appears to stimulate triglyceride synthesis via activation of the PLC, MAPK and AKT signaling pathways. Acts by binding to its receptor, C5AR2, activating G protein-coupled receptor signaling, promoting the phosphorylation, ARRB2-mediated internalization and endocytosis of C5AR2. Its function is as follows. Acts as a chemoattractant for neutrophils in chronic inflammation. This is Complement C3 from Mus musculus (Mouse).